Consider the following 243-residue polypeptide: NAD-dependent protein deacetylase (243 aa).

In terms of domain architecture, Deacetylase sirtuin-type spans 1 to 243 (MRNDLETLKH…VSVVKSLMTE (243 aa)). Residues Ala24, Phe35, Arg36, Gln105, Ile107, Asp108, and His123 each contribute to the NAD(+) site. A nicotinamide-binding site is contributed by Phe35. Nicotinamide-binding residues include Ile107 and Asp108. His123 serves as the catalytic Proton acceptor. Zn(2+) contacts are provided by Cys131, Cys134, Cys151, and Cys154. The NAD(+) site is built by Ser192, Ser193, Asn215, and Asp232.

It belongs to the sirtuin family. Class U subfamily. It depends on Zn(2+) as a cofactor.

The protein resides in the cytoplasm. The catalysed reaction is N(6)-acetyl-L-lysyl-[protein] + NAD(+) + H2O = 2''-O-acetyl-ADP-D-ribose + nicotinamide + L-lysyl-[protein]. NAD-dependent protein deacetylase which modulates the activities of several enzymes which are inactive in their acetylated form. This Staphylococcus aureus (strain Mu50 / ATCC 700699) protein is NAD-dependent protein deacetylase.